Reading from the N-terminus, the 197-residue chain is Probable UbiX-like flavin prenyltransferase (197 aa).

FMN is bound by residues 9–11 (GAT), Ser-36, 87–90 (SMKT), and Arg-122.

This sequence belongs to the UbiX/PAD1 family. YclB subfamily. In terms of assembly, homododecamer.

It carries out the reaction dimethylallyl phosphate + FMNH2 = prenylated FMNH2 + phosphate. Its function is as follows. Involved in the non-oxidative decarboxylation and detoxification of phenolic derivatives under both aerobic and anaerobic conditions. Flavin prenyltransferase that catalyzes the synthesis of the prenylated FMN cofactor (prenyl-FMN) for phenolic acid decarboxylase. The chain is Probable UbiX-like flavin prenyltransferase from Escherichia coli O157:H7.